Here is a 470-residue protein sequence, read N- to C-terminus: Origin of replication complex subunit 4 (470 aa).

63-70 is an ATP binding site; it reads GPRGCGKA.

It belongs to the ORC4 family. Component of the origin recognition complex (ORC) composed of at least ORC1, ORC2, ORC3, ORC4, ORC5 and ORC6. ORC is regulated in a cell-cycle and development dependent manner. It is sequentially assembled at the exit from anaphase of mitosis and disassembled as cells enter S phase. Expressed in the shoot apical meristem (SAM), leaves, ears and roots (including root tips).

The protein resides in the nucleus. Component of the origin recognition complex (ORC) that binds origins of replication. DNA-binding is ATP-dependent. The specific DNA sequences that define origins of replication have not been identified yet. ORC is required to assemble the pre-replication complex necessary to initiate DNA replication. In Oryza sativa subsp. japonica (Rice), this protein is Origin of replication complex subunit 4.